Reading from the N-terminus, the 400-residue chain is Phosphoglycerate kinase (400 aa).

Substrate is bound by residues 23-25 (DLN), Arg-38, 61-64 (HFGR), Arg-120, and Arg-153. ATP contacts are provided by residues Lys-203, Glu-325, and 355–358 (GGDT).

The protein belongs to the phosphoglycerate kinase family. In terms of assembly, monomer.

Its subcellular location is the cytoplasm. It catalyses the reaction (2R)-3-phosphoglycerate + ATP = (2R)-3-phospho-glyceroyl phosphate + ADP. Its pathway is carbohydrate degradation; glycolysis; pyruvate from D-glyceraldehyde 3-phosphate: step 2/5. The sequence is that of Phosphoglycerate kinase from Agrobacterium fabrum (strain C58 / ATCC 33970) (Agrobacterium tumefaciens (strain C58)).